The chain runs to 292 residues: D-alanyl-D-alanine endopeptidase (292 aa).

The signal sequence occupies residues 1–18; sequence MFKKALFILSLCPSFALA. Ser45 (acyl-ester intermediate) is an active-site residue. The active-site Proton acceptor is the Lys48. Ser102 is an active-site residue. Substrate is bound at residue Lys207.

The protein belongs to the peptidase S11 family.

It localises to the periplasm. Functionally, cell wall formation. May play a specialized role in remodeling the cell wall. Specifically hydrolyzes the DD-diaminopimelate-alanine bonds in high-molecular-mass murein sacculi. The chain is D-alanyl-D-alanine endopeptidase (pbpG) from Haemophilus influenzae (strain ATCC 51907 / DSM 11121 / KW20 / Rd).